A 609-amino-acid polypeptide reads, in one-letter code: UvrABC system protein C (609 aa).

A GIY-YIG domain is found at 16–94; sequence SSPGVYRMYD…IKQYMPKYNV (79 aa). The UVR domain maps to 203–238; that stretch reads QQVMSVLVQKMEQASSDMRYEQAALYRDQITALRRV.

The protein belongs to the UvrC family. Interacts with UvrB in an incision complex.

It localises to the cytoplasm. Functionally, the UvrABC repair system catalyzes the recognition and processing of DNA lesions. UvrC both incises the 5' and 3' sides of the lesion. The N-terminal half is responsible for the 3' incision and the C-terminal half is responsible for the 5' incision. The sequence is that of UvrABC system protein C from Shewanella pealeana (strain ATCC 700345 / ANG-SQ1).